The following is a 98-amino-acid chain: Feather beta keratin (98 aa).

Ser-2 is modified (N-acetylserine).

This sequence belongs to the avian keratin family. As to quaternary structure, the avian keratins (F-ker, S-ker, C-ker and B-ker) are a complex mixture of very similar polypeptides.

This chain is Feather beta keratin, found in Mycteria americana (Wood stork).